We begin with the raw amino-acid sequence, 177 residues long: Respiratory growth induced protein 1 (177 aa).

Positions 1-37 are disordered; it reads MGRRKSQAAAERNLEPIKISTDSIKKRPRRDSNEPPF.

The protein belongs to the RGI1 family.

Its subcellular location is the cell membrane. Involved in the control of energetic metabolism and significantly contribute to cell fitness, especially under respiratory growth conditions. This Komagataella phaffii (strain GS115 / ATCC 20864) (Yeast) protein is Respiratory growth induced protein 1 (RGI1).